The following is a 451-amino-acid chain: MLSCIFQDTIFLSSFLAVSLICMTTALWGTILLVERQPLLSESLSHACYPGLLIGALLSYKVPAFSDSLWVIIFFGCLASVLGCLGISFLEKKLAMHKDSALCLVLVSFFGVGVILVSYVKDCCPLLYNKINAYLYGQAATLGYTEAKLALIIFCLSAVVLWWWYRQISVAIFDREFAYSCGLRTRTAELVVLVFISLVIVSGVRSVGILLISAMFVAPPLSARQLSDRLSTILILSSIFGGICGALGCYFSVAFTCQTVVEGKPISIILPTGPLVVFFAGVLVFLCLIFSWKTGWITRYFRRKWFLFSRDEEHLLKIFWYLREQNTYQVGMRDFVRSRKYQEYFGDKVFPRFRMFLLCKKGLVSCSEHQWSLTDKGLARAAKLVRAHRLWESYLVSQLDFNKNEVHHFAEEMEHVLTDELDSTLSQMLQDPDYDPHQREIPKRTRKSDGC.

Transmembrane regions (helical) follow at residues 14–34 (SFLA…ILLV), 38–58 (PLLS…GALL), 70–90 (WVII…ISFL), 100–120 (SALC…VSYV), 145–165 (TEAK…WWWY), 192–212 (VLVF…ILLI), 233–253 (ILIL…YFSV), and 269–289 (ILPT…LCLI). A disordered region spans residues 432 to 451 (PDYDPHQREIPKRTRKSDGC). Residues 434-451 (YDPHQREIPKRTRKSDGC) are compositionally biased toward basic and acidic residues.

Belongs to the ABC-3 integral membrane protein family.

It is found in the cell inner membrane. In terms of biological role, part of an ATP-driven transport system CT_067/CT_068/CT_069/CT_070 for a metal. This is Probable metal transport system membrane protein CT_069 from Chlamydia trachomatis serovar D (strain ATCC VR-885 / DSM 19411 / UW-3/Cx).